The chain runs to 507 residues: Probable cytosol aminopeptidase (507 aa).

Mn(2+) is bound by residues Lys-275 and Asp-280. Residue Lys-287 is part of the active site. Mn(2+) is bound by residues Asp-298, Asp-357, and Glu-359. Residue Arg-361 is part of the active site.

The protein belongs to the peptidase M17 family. Mn(2+) is required as a cofactor.

It is found in the cytoplasm. It catalyses the reaction Release of an N-terminal amino acid, Xaa-|-Yaa-, in which Xaa is preferably Leu, but may be other amino acids including Pro although not Arg or Lys, and Yaa may be Pro. Amino acid amides and methyl esters are also readily hydrolyzed, but rates on arylamides are exceedingly low.. The catalysed reaction is Release of an N-terminal amino acid, preferentially leucine, but not glutamic or aspartic acids.. In terms of biological role, presumably involved in the processing and regular turnover of intracellular proteins. Catalyzes the removal of unsubstituted N-terminal amino acids from various peptides. This Acidobacterium capsulatum (strain ATCC 51196 / DSM 11244 / BCRC 80197 / JCM 7670 / NBRC 15755 / NCIMB 13165 / 161) protein is Probable cytosol aminopeptidase.